The chain runs to 171 residues: UPF0303 protein YPN_2129 (171 aa).

It belongs to the UPF0303 family.

The sequence is that of UPF0303 protein YPN_2129 from Yersinia pestis bv. Antiqua (strain Nepal516).